Reading from the N-terminus, the 214-residue chain is Pyridoxine/pyridoxamine 5'-phosphate oxidase (214 aa).

Residues 8 to 11 and Lys66 contribute to the substrate site; that span reads RINY. Residues 61–66, 76–77, Arg82, Lys83, and Gln105 contribute to the FMN site; these read RIVLVK and FT. Positions 123, 127, and 131 each coordinate substrate. FMN contacts are provided by residues 140–141 and Trp184; that span reads QS. Residue 190–192 coordinates substrate; the sequence is RLH. Arg194 serves as a coordination point for FMN.

The protein belongs to the pyridoxamine 5'-phosphate oxidase family. In terms of assembly, homodimer. FMN is required as a cofactor.

It catalyses the reaction pyridoxamine 5'-phosphate + O2 + H2O = pyridoxal 5'-phosphate + H2O2 + NH4(+). It carries out the reaction pyridoxine 5'-phosphate + O2 = pyridoxal 5'-phosphate + H2O2. The protein operates within cofactor metabolism; pyridoxal 5'-phosphate salvage; pyridoxal 5'-phosphate from pyridoxamine 5'-phosphate: step 1/1. Its pathway is cofactor metabolism; pyridoxal 5'-phosphate salvage; pyridoxal 5'-phosphate from pyridoxine 5'-phosphate: step 1/1. Catalyzes the oxidation of either pyridoxine 5'-phosphate (PNP) or pyridoxamine 5'-phosphate (PMP) into pyridoxal 5'-phosphate (PLP). This chain is Pyridoxine/pyridoxamine 5'-phosphate oxidase, found in Burkholderia multivorans (strain ATCC 17616 / 249).